A 371-amino-acid polypeptide reads, in one-letter code: UDP-N-acetylglucosamine--N-acetylmuramyl-(pentapeptide) pyrophosphoryl-undecaprenol N-acetylglucosamine transferase (371 aa).

UDP-N-acetyl-alpha-D-glucosamine contacts are provided by residues 15–17 (TGG), asparagine 126, arginine 172, serine 199, isoleucine 256, 275–280 (ALTVSE), and glutamine 301.

The protein belongs to the glycosyltransferase 28 family. MurG subfamily.

The protein localises to the cell inner membrane. The catalysed reaction is di-trans,octa-cis-undecaprenyl diphospho-N-acetyl-alpha-D-muramoyl-L-alanyl-D-glutamyl-meso-2,6-diaminopimeloyl-D-alanyl-D-alanine + UDP-N-acetyl-alpha-D-glucosamine = di-trans,octa-cis-undecaprenyl diphospho-[N-acetyl-alpha-D-glucosaminyl-(1-&gt;4)]-N-acetyl-alpha-D-muramoyl-L-alanyl-D-glutamyl-meso-2,6-diaminopimeloyl-D-alanyl-D-alanine + UDP + H(+). The protein operates within cell wall biogenesis; peptidoglycan biosynthesis. Its function is as follows. Cell wall formation. Catalyzes the transfer of a GlcNAc subunit on undecaprenyl-pyrophosphoryl-MurNAc-pentapeptide (lipid intermediate I) to form undecaprenyl-pyrophosphoryl-MurNAc-(pentapeptide)GlcNAc (lipid intermediate II). This chain is UDP-N-acetylglucosamine--N-acetylmuramyl-(pentapeptide) pyrophosphoryl-undecaprenol N-acetylglucosamine transferase, found in Francisella tularensis subsp. mediasiatica (strain FSC147).